Here is a 235-residue protein sequence, read N- to C-terminus: MSHSRLIIALDYPEAGPALALADRLSPERCALKVGKELFVAEGPQLVDALVRRGYRVFLDLKFHDIPNTVAGACRSAAATGAWMVNVHALGGAAMMAAAREALGETGDRPLLTAVTVLTSHSDATLREIGLAGPADAAVCRLAELARGAGVDGVVCSAREAALVRERCGDGFLRVTPGIRPAWAAKGDQARVLSPADAVAGGATHLVVGRPVTRADEPLAALARLERELAAQDET.

Substrate-binding positions include aspartate 11, lysine 33, 60-69 (DLKFHDIPNT), threonine 119, arginine 180, glutamine 189, glycine 209, and arginine 210. The active-site Proton donor is the lysine 62.

It belongs to the OMP decarboxylase family. Type 1 subfamily. As to quaternary structure, homodimer.

The enzyme catalyses orotidine 5'-phosphate + H(+) = UMP + CO2. It participates in pyrimidine metabolism; UMP biosynthesis via de novo pathway; UMP from orotate: step 2/2. In terms of biological role, catalyzes the decarboxylation of orotidine 5'-monophosphate (OMP) to uridine 5'-monophosphate (UMP). This Alkalilimnicola ehrlichii (strain ATCC BAA-1101 / DSM 17681 / MLHE-1) protein is Orotidine 5'-phosphate decarboxylase.